The chain runs to 113 residues: Tubulin-folding cofactor A (113 aa).

Residues leucine 83–alanine 113 form a disordered region. Basic and acidic residues predominate over residues lysine 89–alanine 113.

Belongs to the TBCA family. As to quaternary structure, monomer. Supercomplex made of cofactors A to E. Cofactors A and D function by capturing and stabilizing tubulin in a quasi-native conformation. Cofactor E binds to the cofactor D-tubulin complex; interaction with cofactor C then causes the release of tubulin polypeptides that are committed to the native state. Interacts with TUBB9. Expressed in leaves, roots, flowers and stems.

Functionally, tubulin-folding protein involved in the control of the alpha-/beta-tubulin monomer balance. Functions as a reservoir of bound and non-toxic beta-tubulin. Required in the developing embryo. The protein is Tubulin-folding cofactor A (TFCA) of Arabidopsis thaliana (Mouse-ear cress).